Reading from the N-terminus, the 678-residue chain is MGRFGAVSYRQVKQSEADTIEIDSLKNGDIEKYNEENDKISRIPLAQLSINKINGIKSSVIEELSLKRPSYFMATKMIKSLLPYYWKKNPFKFRIILCVSIIFFSKLINLSVPLIFKNIINTLPEKVEWHLLILYGVLFLIQKSIWDIRDLLFQDVNDSATKQINLETFDHLHRLSLSYHLNKRTGSLIKIVERGTSSVVQLLSLLLFNIFPTLVELFTVSTFLLFSYGAEFAFINLTSCVVYIAFTLYVTERRTKHRRLANKKENEASDIKVDSLMNFETIKYFTAESYERKRYDFALMDFFQTNKKSKVSYFLLNFGQSSIIVIGTTLGLGLATWRASQNGFTLGDVIAINTFIAQMFSPLSWLGSSYRMILTAFTDMENLFELLDTQPEVSDSPNAKELNFNDTNNPSKTILPSIEFRNISFTYPNKNKEQQQSSPKILDNISFTVPAGKSIALVGSTGGGKSTIFRLLCRFYDVDQGEILINGENIKDVTQTSLRSIIGVVPQETVLFNDTVAYNIGFGNREANDDQLIDASRRAQILSFIESSPDGFRTVVGERGLRLSGGEKQRVSIARALLKDPPILILDEASSSLDTFTERKIQQAINEVSKGRTTLVIAHRLSTIIHCDEILVLKGGHIVERGSHSYLLDFNGDYAHLWNQQQLSASDLQYTPNQDTFE.

6 helical membrane passes run 95-115, 128-148, 206-226, 230-250, 314-334, and 346-366; these read IILCVSIIFFSKLINLSVPLI, EWHLLILYGVLFLIQKSIWDI, LLFNIFPTLVELFTVSTFLLF, AEFAFINLTSCVVYIAFTLYV, FLLNFGQSSIIVIGTTLGLGL, and LGDVIAINTFIAQMFSPLSWL. An ABC transmembrane type-1 domain is found at 95–375; it reads IILCVSIIFF…LGSSYRMILT (281 aa). The ABC transporter domain maps to 418 to 660; the sequence is IEFRNISFTY…NGDYAHLWNQ (243 aa). ATP-binding positions include tyrosine 427 and 459–470; that span reads GSTGGGKSTIFR.

Belongs to the ABC transporter superfamily. ABCB family. Heavy Metal importer (TC 3.A.1.210) subfamily.

Its subcellular location is the membrane. This is ABC transporter B family member 6 (abcB6) from Dictyostelium discoideum (Social amoeba).